A 556-amino-acid chain; its full sequence is Arginine--tRNA ligase (556 aa).

Residues Ala-132 to His-142 carry the 'HIGH' region motif.

It belongs to the class-I aminoacyl-tRNA synthetase family. As to quaternary structure, monomer.

The protein localises to the cytoplasm. The enzyme catalyses tRNA(Arg) + L-arginine + ATP = L-arginyl-tRNA(Arg) + AMP + diphosphate. The polypeptide is Arginine--tRNA ligase (Anoxybacillus flavithermus (strain DSM 21510 / WK1)).